Reading from the N-terminus, the 293-residue chain is MERLLINTIWRSYATKLTGSQVKLMARGLPKKQPIIGVQDIIVVASGKGGVGKSTVAVNFACSLAKLGKRVGLLDGDIFGPTIPLLMNVHGEPVVNDKNLMIPPQNYNVKCLSMGMLTPVETSVIWRGPLVMSAIQRLLKGTDWGLLDVLVIDTPPGTGDVHLSLSQHAPITGVILVTTPHTAAVQVTLKGASMYEKLNVPIFGVVENMKYTICQNCNQRLEFFKDSRISSLPRKLISLPLDSRIADSNESGVPVVIKYPDSKYSYLFTQLAEEITQILNEQRCNQNQNNSAH.

Residues 214–217 (CQNC) form a CXXC motif probably involved in coordinating iron-sulfur cluster binding region.

Belongs to the Mrp/NBP35 ATP-binding proteins family. In terms of assembly, homodimer; dimerization is not reliant on iron-sulfur cluster binding. It depends on [4Fe-4S] cluster as a cofactor.

The protein localises to the mitochondrion membrane. Iron-sulfur cluster transfer protein involved in the assembly of the mitochondrial membrane respiratory chain NADH dehydrogenase (Complex I). May deliver one or more Fe-S clusters to complex I subunits. Alleviates pausing in mitochondrial DNA (mtDNA) replication at slow zone 2. May be involved in mtDNA-helicase-mediated mtDNA unwinding and replication by transferring iron-sulfur clusters. The protein is Iron-sulfur cluster transfer protein Nubpl of Drosophila melanogaster (Fruit fly).